The sequence spans 202 residues: Ribonuclease HII (202 aa).

One can recognise an RNase H type-2 domain in the interval 11–200 (GLIAGVDEVG…VRKAIEEFNR (190 aa)). Residues Asp-17, Glu-18, and Asp-109 each coordinate a divalent metal cation.

It belongs to the RNase HII family. It depends on Mn(2+) as a cofactor. Requires Mg(2+) as cofactor.

The protein resides in the cytoplasm. The enzyme catalyses Endonucleolytic cleavage to 5'-phosphomonoester.. Its function is as follows. Endonuclease that specifically degrades the RNA of RNA-DNA hybrids. The sequence is that of Ribonuclease HII from Actinobacillus succinogenes (strain ATCC 55618 / DSM 22257 / CCUG 43843 / 130Z).